A 547-amino-acid chain; its full sequence is Methionine--tRNA ligase (547 aa).

A 'HIGH' region motif is present at residues 15–25 (PYANGSIHIGH). Residues Cys-146, Cys-149, Cys-159, and Cys-162 each coordinate Zn(2+). Positions 332-336 (KLSKS) match the 'KMSKS' region motif. Lys-335 is an ATP binding site.

The protein belongs to the class-I aminoacyl-tRNA synthetase family. MetG type 1 subfamily. Monomer. Zn(2+) is required as a cofactor.

It localises to the cytoplasm. It catalyses the reaction tRNA(Met) + L-methionine + ATP = L-methionyl-tRNA(Met) + AMP + diphosphate. Functionally, is required not only for elongation of protein synthesis but also for the initiation of all mRNA translation through initiator tRNA(fMet) aminoacylation. The sequence is that of Methionine--tRNA ligase (metG) from Buchnera aphidicola subsp. Acyrthosiphon pisum (strain APS) (Acyrthosiphon pisum symbiotic bacterium).